The chain runs to 211 residues: Orotate phosphoribosyltransferase (211 aa).

Residue Lys-26 coordinates 5-phospho-alpha-D-ribose 1-diphosphate. 34–35 (FF) is an orotate binding site. 5-phospho-alpha-D-ribose 1-diphosphate-binding positions include 72 to 73 (YK), Arg-98, Lys-99, Lys-102, His-104, and 123 to 131 (DDVITAGTA). The orotate site is built by Thr-127 and Arg-155.

The protein belongs to the purine/pyrimidine phosphoribosyltransferase family. PyrE subfamily. As to quaternary structure, homodimer. Mg(2+) is required as a cofactor.

The enzyme catalyses orotidine 5'-phosphate + diphosphate = orotate + 5-phospho-alpha-D-ribose 1-diphosphate. It functions in the pathway pyrimidine metabolism; UMP biosynthesis via de novo pathway; UMP from orotate: step 1/2. Its function is as follows. Catalyzes the transfer of a ribosyl phosphate group from 5-phosphoribose 1-diphosphate to orotate, leading to the formation of orotidine monophosphate (OMP). This chain is Orotate phosphoribosyltransferase, found in Legionella pneumophila (strain Lens).